Reading from the N-terminus, the 443-residue chain is Trihelix transcription factor ASIL2 (443 aa).

The interval 1–82 is disordered; the sequence is MEDDEDIRSQ…RPTGGGGRED (82 aa). Positions 38 to 48 are enriched in polar residues; it reads YSLTPPGNSSQ. Residues 64-78 show a composition bias toward gly residues; that stretch reads SGGGNNSSGRPTGGG. Positions 84–144 constitute a Myb-like domain; it reads WSEAATAVLI…QCKNRIDTVK (61 aa). Disordered regions lie at residues 238–350 and 413–443; these read FGGS…GNKW and RRMGNTSNDHHHSRKNNINAIVNNNNDLGNN. A compositionally biased stretch (gly residues) spans 239–249; it reads GGSGGGGGGGS. Over residues 271–286 the composition is skewed to low complexity; that stretch reads TLPQQGRTLPQQQQQG. Positions 290-303 match the Bipartite nuclear localization signal motif; the sequence is KRCSESKRWRFRKR. Residues 333-350 show a composition bias toward basic and acidic residues; the sequence is MKTEEKKKQDGDGVGNKW. Residues 360-414 adopt a coiled-coil conformation; sequence FGEAYEQTENAKLQQVVEMEKERMKFLKELELQRMQFFVKTQLEISQLKQQHGRR. Residues 428–443 show a composition bias toward low complexity; the sequence is NNINAIVNNNNDLGNN.

Its subcellular location is the nucleus. Functionally, transcription regulator that may repress the maturation program during early embryogenesis. This is Trihelix transcription factor ASIL2 from Arabidopsis thaliana (Mouse-ear cress).